The chain runs to 84 residues: Beta-cardiotoxin CTX15 (84 aa).

The N-terminal stretch at methionine 1 to threonine 21 is a signal peptide. 4 cysteine pairs are disulfide-bonded: cysteine 24-cysteine 43, cysteine 36-cysteine 61, cysteine 65-cysteine 76, and cysteine 77-cysteine 82.

This sequence belongs to the three-finger toxin family. Short-chain subfamily. Aminergic toxin sub-subfamily. As to expression, expressed by the venom gland.

Its subcellular location is the secreted. Acts as a beta-blocker by binding to beta-1 and beta-2 adrenergic receptors (ADRB1 and ADRB2). It dose-dependently decreases the heart rate (bradycardia), whereas conventional cardiotoxins increases it. At 100 mg/kg, intraperitoneal injection into mice provokes labored breathing, impaired locomotion, lack of response to external stimuli, and death (after 30 minutes). This is Beta-cardiotoxin CTX15 from Ophiophagus hannah (King cobra).